An 88-amino-acid polypeptide reads, in one-letter code: Small ribosomal subunit protein bS20 (88 aa).

The protein belongs to the bacterial ribosomal protein bS20 family.

In terms of biological role, binds directly to 16S ribosomal RNA. This Nitrobacter winogradskyi (strain ATCC 25391 / DSM 10237 / CIP 104748 / NCIMB 11846 / Nb-255) protein is Small ribosomal subunit protein bS20.